The primary structure comprises 433 residues: Malate synthase (433 aa).

Residue 16 to 17 (TS) participates in acetyl-CoA binding. D52 serves as a coordination point for Mg(2+). R84 is an acetyl-CoA binding site. Residues R84, E158, and 191–192 (VD) each bind glyoxylate. Residues E158 and D192 each coordinate Mg(2+). Acetyl-CoA contacts are provided by R236 and L259. D388 (proton acceptor) is an active-site residue.

It belongs to the HpcH/HpaI aldolase family. In terms of assembly, homotrimer and homohexamer in equilibrium. It depends on Mg(2+) as a cofactor.

Its subcellular location is the cytoplasm. It catalyses the reaction glyoxylate + acetyl-CoA + H2O = (S)-malate + CoA + H(+). Its pathway is carbohydrate metabolism; glyoxylate cycle; (S)-malate from isocitrate: step 2/2. Its function is as follows. Involved in the glyoxylate cycle which synthesizes precursors for carbohydrates from C2 compounds such as acetate. Catalyzes the Claisen condensation between acetyl-coenzyme A (acetyl-CoA) and glyoxylate to form the malyl-CoA intermediate that is subsequently hydrolyzed to produce malate and CoA. The chain is Malate synthase (aceB) from Haloferax volcanii (strain ATCC 29605 / DSM 3757 / JCM 8879 / NBRC 14742 / NCIMB 2012 / VKM B-1768 / DS2) (Halobacterium volcanii).